The sequence spans 330 residues: tRNA U34 carboxymethyltransferase (330 aa).

Residues Lys-91, Trp-105, Lys-110, Gly-130, Asp-152 to Ser-154, Ile-181 to Glu-182, Met-196, Tyr-200, and Arg-315 contribute to the carboxy-S-adenosyl-L-methionine site.

The protein belongs to the class I-like SAM-binding methyltransferase superfamily. CmoB family. Homotetramer.

It catalyses the reaction carboxy-S-adenosyl-L-methionine + 5-hydroxyuridine(34) in tRNA = 5-carboxymethoxyuridine(34) in tRNA + S-adenosyl-L-homocysteine + H(+). Its function is as follows. Catalyzes carboxymethyl transfer from carboxy-S-adenosyl-L-methionine (Cx-SAM) to 5-hydroxyuridine (ho5U) to form 5-carboxymethoxyuridine (cmo5U) at position 34 in tRNAs. In Shewanella oneidensis (strain ATCC 700550 / JCM 31522 / CIP 106686 / LMG 19005 / NCIMB 14063 / MR-1), this protein is tRNA U34 carboxymethyltransferase.